Reading from the N-terminus, the 342-residue chain is L-threonine 3-dehydrogenase (342 aa).

A Zn(2+)-binding site is contributed by cysteine 38. Residues threonine 40 and histidine 43 each act as charge relay system in the active site. Zn(2+) contacts are provided by histidine 63, glutamate 64, cysteine 93, cysteine 96, cysteine 99, and cysteine 107. NAD(+) contacts are provided by residues isoleucine 175, aspartate 195, arginine 200, 262-264 (LGI), and 286-287 (IY).

This sequence belongs to the zinc-containing alcohol dehydrogenase family. In terms of assembly, homotetramer. The cofactor is Zn(2+).

It localises to the cytoplasm. The catalysed reaction is L-threonine + NAD(+) = (2S)-2-amino-3-oxobutanoate + NADH + H(+). The protein operates within amino-acid degradation; L-threonine degradation via oxydo-reductase pathway; glycine from L-threonine: step 1/2. In terms of biological role, catalyzes the NAD(+)-dependent oxidation of L-threonine to 2-amino-3-ketobutyrate. This chain is L-threonine 3-dehydrogenase, found in Burkholderia ambifaria (strain MC40-6).